Consider the following 133-residue polypeptide: Secretin (133 aa).

The N-terminal stretch at 1–22 is a signal peptide; sequence MEPPLPTPMLLLLLLLLSSSAA. The propeptide occupies 23-30; sequence LPAPPRTP. V58 is subject to Valine amide. Residue S62 is modified to Phosphoserine. Residues 62-133 constitute a propeptide that is removed on maturation; the sequence is SEQDTENIPE…EWTETTRPPR (72 aa).

The protein belongs to the glucagon family. Highly expressed in the intestine. Also expressed in the hippocampus, cerebellum and the brain stem in adult mouse brain. In the hippocampus, expressed in the dentate gyrus, the hilus and the molecular layer.

It localises to the secreted. Functionally, hormone involved in different processes, such as regulation of the pH of the duodenal content, food intake and water homeostasis. Exerts its biological effects by binding to secretin receptor (SCTR), a G-protein coupled receptor expressed in the basolateral domain of several cells. Acts as a key gastrointestinal hormone by regulating the pH of the duodenal content. Secreted by S cells of the duodenum in the crypts of Lieberkuehn and regulates the pH of the duodenum by (1) inhibiting the secretion of gastric acid from the parietal cells of the stomach and (2) stimulating the production of bicarbonate (NaHCO(3)) from the ductal cells of the pancreas. Production of bicarbonate is essential to neutralize the pH and ensure no damage is done to the small intestine by the gastric acid. In addition to regulating the pH of the duodenal content, plays a central role in diet induced thermogenesis: acts as a non-sympathetic brown fat (BAT) activator mediating prandial thermogenesis, which consequentially induces satiation. Mechanistically, secretin released by the gut after a meal binds to secretin receptor (SCTR) in brown adipocytes, activating brown fat thermogenesis by stimulating lipolysis, which is sensed in the brain and promotes satiation. Also able to stimulate lipolysis in white adipocytes. Also plays an important role in cellular osmoregulation: released into the systemic circulation in response to hyperosmolality and acts at different levels in the hypothalamus, pituitary and kidney to regulate water homeostasis. Also plays a role in the central nervous system, possibly by acting as a neuropeptide hormone: required for hippocampal synaptic function and neural progenitor cells maintenance. The sequence is that of Secretin from Mus musculus (Mouse).